The following is a 409-amino-acid chain: MSPSKTTPPSPTALVYGATGVTGWGLCKNLLEQQADSASTPTFSRVIGVCKQPAQDLGLFLEDKRFELVDGVDLLQGEDSVVEVLKEVKGIENVTHVFYVANRNSPSDGPDERISFNVKMIQSAVKAAEQLSSNMQVLIMQTSINVYGIFASLMGGTLTCPSPLVESADRTPSPYREMDVHYAQCDELKRLSKGKSWSWFEVRPDAVIGYVPRRHENNFTVSLGLFLATYAHVHGAGAPVRFPGTPESWKCKFSMVSQDQLARFEIHLATHAEGLQSGEAFNVSNGDVLTWSKLWPEAAARFGLRGVGPEGAGEEEGKGEAEGGAKGATGWSWPLGDETTMKKWEEENQVQKGWGGNLSEVCFVNTMRPTVDRILSLDKAKKIGFEARDDTIAAFDKAWALFKKARILP.

The NADP(+) site is built by V49, L68, K195, V288, T290, and A299. The disordered stretch occupies residues G306–S332.

Belongs to the short-chain dehydrogenases/reductases (SDR) family. Highly divergent.

Its pathway is mycotoxin biosynthesis. In terms of biological role, short chain dehydrogenase; part of the gene cluster that mediates the biosynthesis of sirodesmin PL, an epipolythiodioxopiperazine (ETP) characterized by a disulfide bridged cyclic dipeptide and that acts as a phytotoxin which is involved in the blackleg didease of canola. SirD catalyzes the O-prenylation of L-tyrosine (L-Tyr) in the presence of dimethylallyl diphosphate (DMAPP) to yield 4-O-dimethylallyl-L-Tyr, and therefore represents probably the first pathway-specific enzyme in the biosynthesis of sirodesmin PL. 4-O-dimethylallyl-L-Tyr, then undergoes condensation with L-Ser in a reaction catalyzed by the non-ribosomal peptide synthase sirP to form the diketopiperazine (DKP) backbone. Further bishydroxylation of the DKP performed by the cytochrome P450 monooxygenase sirC leads to the production of the intermediate phomamide. This step is essential to form the reactive thiol group required for toxicity of sirodesmin PL. The next steps of sirodesmin biosynthesis are not well understood yet, but some predictions could be made from intermediate compounds identification. Phomamide is converted into phomalizarine via oxidation, probably by sirT. Further oxidation, methylation (by sirM or sirN) and reduction steps convert phomalizarine to deacetyl sirodesmin. Finally, acetyltransferase sirH probably acetylates deacetyl sirodesmin to produce sirodesmin PL. This is Short chain dehydrogenase sirS from Leptosphaeria maculans (Blackleg fungus).